We begin with the raw amino-acid sequence, 162 residues long: 2-amino-4-hydroxy-6-hydroxymethyldihydropteridine pyrophosphokinase (162 aa).

It belongs to the HPPK family.

It carries out the reaction 6-hydroxymethyl-7,8-dihydropterin + ATP = (7,8-dihydropterin-6-yl)methyl diphosphate + AMP + H(+). The protein operates within cofactor biosynthesis; tetrahydrofolate biosynthesis; 2-amino-4-hydroxy-6-hydroxymethyl-7,8-dihydropteridine diphosphate from 7,8-dihydroneopterin triphosphate: step 4/4. Catalyzes the transfer of pyrophosphate from adenosine triphosphate (ATP) to 6-hydroxymethyl-7,8-dihydropterin, an enzymatic step in folate biosynthesis pathway. The sequence is that of 2-amino-4-hydroxy-6-hydroxymethyldihydropteridine pyrophosphokinase (folK) from Pseudomonas aeruginosa (strain ATCC 15692 / DSM 22644 / CIP 104116 / JCM 14847 / LMG 12228 / 1C / PRS 101 / PAO1).